The sequence spans 506 residues: Fe(3+)-transport system permease protein FbpB 2 (506 aa).

Helical transmembrane passes span 9-29, 57-77, 90-110, 116-136, 174-194, 218-238, 275-295, 314-334, 350-370, 379-399, 428-448, and 480-500; these read LTLL…YVIL, LLMV…AFLL, VAMT…WISL, VFWG…YLPV, IGSS…AVSI, ALLS…EIFF, IFIL…IVGT, FIIS…LVWA, PYLL…YFSI, TFFV…QTTL, LTLP…FLNL, and AAAT…VFLL. Residues 52–233 form the ABC transmembrane type-1 1 domain; that stretch reads LSNTMLLMVC…LMAICILIVF (182 aa). Residues 310-500 enclose the ABC transmembrane type-1 2 domain; the sequence is FSNSFIISGL…LFSGIPVFLL (191 aa).

It belongs to the binding-protein-dependent transport system permease family. FbpB subfamily. In terms of assembly, the complex is composed of two ATP-binding proteins (FbpC), two transmembrane proteins (FbpB) and a solute-binding protein (FbpA).

The protein localises to the cell inner membrane. Part of the ABC transporter complex FbpABC (TC 3.A.1.10.1) involved in Fe(3+) ions import. Probably responsible for the translocation of the substrate across the membrane. The protein is Fe(3+)-transport system permease protein FbpB 2 (fbpB2) of Haemophilus influenzae (strain ATCC 51907 / DSM 11121 / KW20 / Rd).